The chain runs to 178 residues: C-phycoerythrin class 2 subunit beta (178 aa).

Residues C50 and C61 each contribute to the phycourobilin site. (2R,3E)-phycoerythrobilin is bound by residues C82 and C159.

The protein belongs to the phycobiliprotein family. Heterodimer of an alpha and a beta chain. Contains two covalently linked phycoerythrobilin chromophores and one covalently linked phycourobilin chromophore.

The protein resides in the cellular thylakoid membrane. In terms of biological role, light-harvesting photosynthetic bile pigment-protein from the phycobiliprotein complex. The sequence is that of C-phycoerythrin class 2 subunit beta (mpeB) from Synechococcus sp. (strain WH8020).